The following is a 313-amino-acid chain: MTQMPDPQNPIRIGTRGSALALAQAHETRDRLMAAHGLAADAFRIVVIKTTGDRVLDRPLKEIGGKGLFTREIEDALLAHEIDIAVHSMKDMPTIQPEGLVIDCYLPREDVRDAFVSAQFAAISELPQGAVVGSSSLRRRAQLAARRPDLKLVEFRGNVQTRLKKLEDGVAVATFLAMAGLTRLGMLHVARGAVEPDEMLPAVAQGCIGVERRADDARTASLLAAISDRDSALRVTAERAFLARLDGSCQTPIAGLAELQGDRLRLRGEILRPDGSEVIAAERVGPAADGAAMGTDLAEELRGRAPADFFDWS.

S-(dipyrrolylmethanemethyl)cysteine is present on C249.

It belongs to the HMBS family. Monomer. It depends on dipyrromethane as a cofactor.

It carries out the reaction 4 porphobilinogen + H2O = hydroxymethylbilane + 4 NH4(+). Its pathway is porphyrin-containing compound metabolism; protoporphyrin-IX biosynthesis; coproporphyrinogen-III from 5-aminolevulinate: step 2/4. Functionally, tetrapolymerization of the monopyrrole PBG into the hydroxymethylbilane pre-uroporphyrinogen in several discrete steps. The chain is Porphobilinogen deaminase from Paracoccus denitrificans (strain Pd 1222).